The sequence spans 88 residues: U-scoloptoxin(01)-Tl1a (88 aa).

The first 16 residues, 1-16, serve as a signal peptide directing secretion; sequence MSVYGLLSLLIFIVLA. The region spanning 25-81 is the Chitin-binding type-2 domain; it reads GKDCSEKEEYLYDSSNCDIFYECDESLKPQRMMCGPGTGWNQDKLVCDFLTNIDCTR. A disulfide bridge links C58 with C71.

Belongs to the scoloptoxin-01 family. Contains 3 disulfide bonds. As to expression, expressed by the venom gland.

The protein localises to the secreted. The sequence is that of U-scoloptoxin(01)-Tl1a from Thereuopoda longicornis (Long-legged centipede).